The sequence spans 610 residues: UvrABC system protein C (610 aa).

The GIY-YIG domain occupies 16 to 94; it reads NQPGVYRMYD…IKRYQPRYNV (79 aa). The region spanning 204-239 is the UVR domain; it reads SQVIDALVARMEEASRALRFEEAARLRDQIQAVRRV.

It belongs to the UvrC family. In terms of assembly, interacts with UvrB in an incision complex.

It is found in the cytoplasm. Functionally, the UvrABC repair system catalyzes the recognition and processing of DNA lesions. UvrC both incises the 5' and 3' sides of the lesion. The N-terminal half is responsible for the 3' incision and the C-terminal half is responsible for the 5' incision. The chain is UvrABC system protein C from Edwardsiella ictaluri (strain 93-146).